The primary structure comprises 448 residues: UDP-glucose 6-dehydrogenase (448 aa).

Residues 2–19 (NITFIGSGYVGLVSGIIM), Val11, Asp30, Lys35, Thr121, and Glu152 each bind NAD(+). Residues 148 to 152 (EFLRE), Lys204, Asn208, 249 to 253 (FLNAG), and Gly257 contribute to the substrate site. The active-site Nucleophile is the Cys260. Lys263 provides a ligand contact to NAD(+). Lys321 serves as a coordination point for substrate. Arg328 is an NAD(+) binding site.

The protein belongs to the UDP-glucose/GDP-mannose dehydrogenase family.

The enzyme catalyses UDP-alpha-D-glucose + 2 NAD(+) + H2O = UDP-alpha-D-glucuronate + 2 NADH + 3 H(+). The protein operates within nucleotide-sugar biosynthesis; UDP-alpha-D-glucuronate biosynthesis; UDP-alpha-D-glucuronate from UDP-alpha-D-glucose: step 1/1. The sequence is that of UDP-glucose 6-dehydrogenase (udg) from Rickettsia felis (strain ATCC VR-1525 / URRWXCal2) (Rickettsia azadi).